Here is a 183-residue protein sequence, read N- to C-terminus: Ribosome rescue factor SmrB (183 aa).

Positions 98 to 173 (LDLHGLTQMQ…GDAALLVLIE (76 aa)) constitute a Smr domain.

It belongs to the SmrB family. Associates with collided ribosomes, but not with correctly translating polysomes.

In terms of biological role, acts as a ribosome collision sensor. Detects stalled/collided disomes (pairs of ribosomes where the leading ribosome is stalled and a second ribosome has collided with it) and endonucleolytically cleaves mRNA at the 5' boundary of the stalled ribosome. Stalled/collided disomes form a new interface (primarily via the 30S subunits) that binds SmrB. Cleaved mRNA becomes available for tmRNA ligation, leading to ribosomal subunit dissociation and rescue of stalled ribosomes. The chain is Ribosome rescue factor SmrB from Enterobacter sp. (strain 638).